A 408-amino-acid polypeptide reads, in one-letter code: Chaperone protein dnaJ 1, mitochondrial (408 aa).

A mitochondrion-targeting transit peptide spans 1 to 26 (MRRFNWVLRHVQARRTFDSAIGLRQG). The J domain occupies 48-113 (NYYDVLGVSP…ERREEYDKLQ (66 aa)). The segment at 173–247 (GCTKRLSFDA…CRGSGIVEGT (75 aa)) adopts a CR-type zinc-finger fold. Residues C186, C189, C203, C206, C221, C224, C235, and C238 each coordinate Zn(2+). 4 CXXCXGXG motif repeats span residues 186 to 193 (CDSCDGLG), 203 to 210 (CPTCRGVG), 221 to 228 (CQTCKGTG), and 235 to 242 (CMSCRGSG).

This sequence belongs to the DnaJ family. B/II subfamily. In terms of assembly, homodimer. It depends on Zn(2+) as a cofactor. As to expression, ubiquitous.

It is found in the mitochondrion. Functionally, plays a continuous role in plant development probably in the structural organization of compartments. The protein is Chaperone protein dnaJ 1, mitochondrial (ATJ1) of Arabidopsis thaliana (Mouse-ear cress).